Reading from the N-terminus, the 286-residue chain is Protease HtpX (286 aa).

Helical transmembrane passes span 4 to 24 and 33 to 53; these read ILLF…ILSL and TGLL…SLFL. A Zn(2+)-binding site is contributed by His139. The active site involves Glu140. A Zn(2+)-binding site is contributed by His143. A run of 2 helical transmembrane segments spans residues 147 to 167 and 186 to 206; these read GDMV…IFVS and IYFL…SMIA. Glu214 contributes to the Zn(2+) binding site.

This sequence belongs to the peptidase M48B family. The cofactor is Zn(2+).

The protein localises to the cell inner membrane. This chain is Protease HtpX, found in Pasteurella multocida (strain Pm70).